A 188-amino-acid chain; its full sequence is Elongation factor P-like protein (188 aa).

This sequence belongs to the elongation factor P family.

This is Elongation factor P-like protein from Xylella fastidiosa (strain M12).